Consider the following 140-residue polypeptide: uncharacterized protein (140 aa).

This is an uncharacterized protein from Neurospora crassa (strain ATCC 24698 / 74-OR23-1A / CBS 708.71 / DSM 1257 / FGSC 987).